Reading from the N-terminus, the 457-residue chain is Multidrug resistance protein MdtK (457 aa).

12 helical membrane-spanning segments follow: residues 11–31 (LLAL…MGFV), 53–73 (IWLP…PVIA), 93–113 (WLAG…GYII), 127–147 (AVGY…FQVA), 160–180 (GMVM…IFIY), 188–208 (LGGI…FIAM), 243–263 (LPIA…ALLV), 276–296 (IALN…AAVT), 314–334 (AART…IFTV), 350–370 (VVAL…SDSI), 387–407 (IFFI…YILA), and 418–438 (PAGF…LMML).

Belongs to the multi antimicrobial extrusion (MATE) (TC 2.A.66.1) family. MdtK subfamily.

Its subcellular location is the cell inner membrane. In terms of biological role, multidrug efflux pump that functions probably as a Na(+)/drug antiporter. In Salmonella enteritidis PT4 (strain P125109), this protein is Multidrug resistance protein MdtK.